We begin with the raw amino-acid sequence, 105 residues long: Met repressor (105 aa).

It belongs to the MetJ family. As to quaternary structure, homodimer.

The protein resides in the cytoplasm. Functionally, this regulatory protein, when combined with SAM (S-adenosylmethionine) represses the expression of the methionine regulon and of enzymes involved in SAM synthesis. In Citrobacter koseri (strain ATCC BAA-895 / CDC 4225-83 / SGSC4696), this protein is Met repressor.